A 216-amino-acid polypeptide reads, in one-letter code: Imidazole glycerol phosphate synthase subunit HisH (216 aa).

The Glutamine amidotransferase type-1 domain occupies 2-216 (SVAIVDYGSG…LISNFLKWKP (215 aa)). Residue Cys88 is the Nucleophile of the active site. Active-site residues include His196 and Glu198.

As to quaternary structure, heterodimer of HisH and HisF.

The protein resides in the cytoplasm. It catalyses the reaction 5-[(5-phospho-1-deoxy-D-ribulos-1-ylimino)methylamino]-1-(5-phospho-beta-D-ribosyl)imidazole-4-carboxamide + L-glutamine = D-erythro-1-(imidazol-4-yl)glycerol 3-phosphate + 5-amino-1-(5-phospho-beta-D-ribosyl)imidazole-4-carboxamide + L-glutamate + H(+). The enzyme catalyses L-glutamine + H2O = L-glutamate + NH4(+). The protein operates within amino-acid biosynthesis; L-histidine biosynthesis; L-histidine from 5-phospho-alpha-D-ribose 1-diphosphate: step 5/9. Functionally, IGPS catalyzes the conversion of PRFAR and glutamine to IGP, AICAR and glutamate. The HisH subunit catalyzes the hydrolysis of glutamine to glutamate and ammonia as part of the synthesis of IGP and AICAR. The resulting ammonia molecule is channeled to the active site of HisF. In Rhodopseudomonas palustris (strain ATCC BAA-98 / CGA009), this protein is Imidazole glycerol phosphate synthase subunit HisH.